We begin with the raw amino-acid sequence, 132 residues long: Small ribosomal subunit protein uS8 (132 aa).

This sequence belongs to the universal ribosomal protein uS8 family. In terms of assembly, part of the 30S ribosomal subunit. Contacts proteins S5 and S12.

Its function is as follows. One of the primary rRNA binding proteins, it binds directly to 16S rRNA central domain where it helps coordinate assembly of the platform of the 30S subunit. The protein is Small ribosomal subunit protein uS8 of Enterococcus faecalis (strain ATCC 700802 / V583).